Here is a 468-residue protein sequence, read N- to C-terminus: Glycine--tRNA ligase (468 aa).

Arg101 and Glu170 together coordinate substrate. ATP contacts are provided by residues 202 to 204 (RNE), 212 to 217 (FRTREF), 289 to 290 (EL), and 333 to 336 (GLTR). 217-221 (FEQME) contributes to the substrate binding site. Position 329–333 (329–333 (EPAAG)) interacts with substrate.

This sequence belongs to the class-II aminoacyl-tRNA synthetase family. Homodimer.

The protein resides in the cytoplasm. The catalysed reaction is tRNA(Gly) + glycine + ATP = glycyl-tRNA(Gly) + AMP + diphosphate. Its function is as follows. Catalyzes the attachment of glycine to tRNA(Gly). The protein is Glycine--tRNA ligase of Mycolicibacterium vanbaalenii (strain DSM 7251 / JCM 13017 / BCRC 16820 / KCTC 9966 / NRRL B-24157 / PYR-1) (Mycobacterium vanbaalenii).